Here is a 423-residue protein sequence, read N- to C-terminus: Protein SOSEKI 5 (423 aa).

A disordered region spans residues 1–33; sequence MSSRVFRATPDNNYLVPRRSKDQQDTSPDRNRI. The segment covering 19–33 has biased composition (basic and acidic residues); the sequence is RSKDQQDTSPDRNRI. The tract at residues 45 to 136 is DIX-like oligomerization domain; the sequence is RKVPVVYYLC…YVLKGSEVLD (92 aa). Disordered regions lie at residues 150–172 and 196–258; these read SSFRDPRSLNPDKNSGDDIPAVI and SSAE…SPET. Polar residues predominate over residues 196–211; the sequence is SSAESTQRLAADASTQ. 2 short sequence motifs (association to cell membranes) span residues 233-234 and 303-304; these read AS and CG. A disordered region spans residues 379–423; that stretch reads SSSYNADRCSRMGPTTEKDEEEAVRAKCIPRKPKPVAKRNNGGQQ. The span at 406-415 shows a compositional bias: basic residues; sequence CIPRKPKPVA.

Belongs to the SOSEKI family. As to quaternary structure, homodimer. Forms long polymer filaments with other SOKs proteins polymers (e.g. SOK1, SOK2, SOK3 and SOK4) crucial for polar localization and biological activity. Binds to ANGUSTIFOLIA (AN). As to expression, expressed during embryogenesis and in roots.

Its subcellular location is the cell membrane. In terms of biological role, SOSEKI proteins (SOK1-5) locally interpret global polarity cues and can influence cell division orientation to coordinate cell polarization relative to body axes. The chain is Protein SOSEKI 5 from Arabidopsis thaliana (Mouse-ear cress).